Reading from the N-terminus, the 84-residue chain is Large ribosomal subunit protein bL27 (84 aa).

The segment at 1–22 is disordered; sequence MAHKKAGGSTRNGRDSESKRLG.

It belongs to the bacterial ribosomal protein bL27 family.

This is Large ribosomal subunit protein bL27 from Shewanella pealeana (strain ATCC 700345 / ANG-SQ1).